The chain runs to 199 residues: MVLFSEDHIQETRRRGRIEVICGSMFSGKTEELIRRMKRAKFARQRVEIFKPAIDTRYSEGDVVSHDSNSISSTPIDSSASILLFTSEIDVVGIDEAQFFDSGLIDVCNQLANNGVRVIIAGLDMDFKGVPFGPMPALCAIADEVSKVHAICVKCGQLASFSHRTVKNDKQVLLGETAQYEPLCRECYQRALQEDREKS.

ATP is bound by residues 23–30 (GSMFSGKT) and 95–98 (DEAQ). The active-site Proton acceptor is E96. The Zn(2+) site is built by C152, C155, C184, and C187.

This sequence belongs to the thymidine kinase family. In terms of assembly, homotetramer.

It localises to the cytoplasm. The enzyme catalyses thymidine + ATP = dTMP + ADP + H(+). This is Thymidine kinase from Bacteroides fragilis (strain YCH46).